Reading from the N-terminus, the 258-residue chain is Imidazole glycerol phosphate synthase subunit HisF (258 aa).

Residues D11 and D130 contribute to the active site.

The protein belongs to the HisA/HisF family. As to quaternary structure, heterodimer of HisH and HisF.

It is found in the cytoplasm. It catalyses the reaction 5-[(5-phospho-1-deoxy-D-ribulos-1-ylimino)methylamino]-1-(5-phospho-beta-D-ribosyl)imidazole-4-carboxamide + L-glutamine = D-erythro-1-(imidazol-4-yl)glycerol 3-phosphate + 5-amino-1-(5-phospho-beta-D-ribosyl)imidazole-4-carboxamide + L-glutamate + H(+). It participates in amino-acid biosynthesis; L-histidine biosynthesis; L-histidine from 5-phospho-alpha-D-ribose 1-diphosphate: step 5/9. Its function is as follows. IGPS catalyzes the conversion of PRFAR and glutamine to IGP, AICAR and glutamate. The HisF subunit catalyzes the cyclization activity that produces IGP and AICAR from PRFAR using the ammonia provided by the HisH subunit. The sequence is that of Imidazole glycerol phosphate synthase subunit HisF from Yersinia enterocolitica serotype O:8 / biotype 1B (strain NCTC 13174 / 8081).